We begin with the raw amino-acid sequence, 137 residues long: Nucleoside diphosphate kinase (137 aa).

The ATP site is built by Lys9, Phe57, Arg85, Thr91, Arg102, and Asn112. His115 (pros-phosphohistidine intermediate) is an active-site residue.

Belongs to the NDK family. As to quaternary structure, homotetramer. Requires Mg(2+) as cofactor.

It localises to the cytoplasm. It catalyses the reaction a 2'-deoxyribonucleoside 5'-diphosphate + ATP = a 2'-deoxyribonucleoside 5'-triphosphate + ADP. The enzyme catalyses a ribonucleoside 5'-diphosphate + ATP = a ribonucleoside 5'-triphosphate + ADP. Major role in the synthesis of nucleoside triphosphates other than ATP. The ATP gamma phosphate is transferred to the NDP beta phosphate via a ping-pong mechanism, using a phosphorylated active-site intermediate. In Sulfurimonas denitrificans (strain ATCC 33889 / DSM 1251) (Thiomicrospira denitrificans (strain ATCC 33889 / DSM 1251)), this protein is Nucleoside diphosphate kinase.